A 340-amino-acid polypeptide reads, in one-letter code: GATA transcription factor 20 (340 aa).

Residues 1–88 (MSHHDGSKPY…MEEDEDAQHH (88 aa)) are disordered. Residues 25-47 (ADDAAAHVAPTVDHLAAVAAEAE) show a composition bias toward low complexity. A compositionally biased stretch (basic and acidic residues) spans 48-60 (AMARFEEEHRALG). A compositionally biased stretch (acidic residues) spans 61–84 (AEEEYEEEEDELEEEEEEMEEDED). A Tify domain is found at 121–156 (QPMASNQLTLSFQGEVYVFDSVSPDKVQAVLLLLGG). Residues 182-224 (RVASLMRFREKRKERNFDKKIRYSVRKEVALRMQRNRGQFTSS) enclose the CCT domain. Residues 215–253 (QRNRGQFTSSKPKGDEATSELTASDGSPNWGSVEGRPPS) form a disordered region. Positions 233 to 244 (SELTASDGSPNW) are enriched in polar residues. The GATA-type zinc-finger motif lies at 257 to 284 (CHHCGINAKATPMMRRGPDGPRTLCNAC). Over residues 313-325 (DGNGSAAAPTTEQ) the composition is skewed to polar residues. The interval 313–340 (DGNGSAAAPTTEQEIPAPATVNGHESST) is disordered.

This sequence belongs to the type IV zinc-finger family. Class C subfamily.

It is found in the nucleus. Functionally, transcriptional activator that specifically binds 5'-GATA-3' or 5'-GAT-3' motifs within gene promoters. The chain is GATA transcription factor 20 from Oryza sativa subsp. japonica (Rice).